A 795-amino-acid polypeptide reads, in one-letter code: Protocadherin beta-5 (795 aa).

Residues 1 to 30 form the signal peptide; that stretch reads METALAKTPQKRQVMFLAILLLLWEAGSEA. Topologically, residues 31–689 are extracellular; sequence VRYSIPEETE…AQADSLTVYL (659 aa). Cadherin domains are found at residues 35-133, 138-242, 247-346, 351-450, and 455-560; these read IPEE…APEF, MLLK…APEF, YEVQ…APEL, LSSP…APAF, and YTLF…SPFV. Residue Asn-169 is glycosylated (N-linked (GlcNAc...) asparagine). Residue Lys-296 is modified to N6-acetyllysine. N-linked (GlcNAc...) asparagine glycosylation is found at Asn-417 and Asn-435. N-linked (GlcNAc...) asparagine glycosylation is present at Asn-566. The Cadherin 6 domain maps to 567-670; that stretch reads GSAPCTELVP…LVDGFSQPYL (104 aa). Residues 690 to 710 traverse the membrane as a helical segment; the sequence is VVALASVSSLFLFSVLLFVAV. Over 711–795 the chain is Cytoplasmic; sequence RLCRRSRAAP…AAFRNSFGLN (85 aa).

Its subcellular location is the cell membrane. In terms of biological role, potential calcium-dependent cell-adhesion protein. May be involved in the establishment and maintenance of specific neuronal connections in the brain. The protein is Protocadherin beta-5 (PCDHB5) of Homo sapiens (Human).